Consider the following 1430-residue polypeptide: Bromodomain-containing protein homolog (1430 aa).

The segment at 23–49 (FACPVRGCDRSYKTIMGLQYHLMKYDH) adopts a C2H2-type zinc-finger fold. The interval 51–111 (NPQPLTPVLT…AGGGSASGVS (61 aa)) is disordered. The segment covering 62 to 81 (SRKKARSRSGGHHSTPRPHK) has biased composition (basic residues). The segment at 283 to 333 (DAVCCICLDGECQNTNVILFCDMCNLAVHQDCYGVPYIPEGQWLCRRCLQS) adopts a PHD-type 1 zinc-finger fold. Residues Cys286, Cys289, Cys303, Cys306, His311, Cys314, Cys327, and Cys330 each contribute to the Zn(2+) site. The segment at 337–370 (PVNCVLCPNAGGAFKQTDHGQWAHVVCALWIPEV) adopts a C2HC pre-PHD-type zinc-finger fold. The segment at 394-457 (LTCYVCKEKG…QKFAYCHAHT (64 aa)) adopts a PHD-type 2 zinc-finger fold. One can recognise a Bromo domain in the interval 611-715 (LQLNPLEAAL…DQAAPLFVQV (105 aa)). A compositionally biased stretch (basic residues) spans 796–805 (KARFAARHSS). Disordered stretches follow at residues 796–887 (KARF…SSPV), 901–942 (AQAA…TTAA), 1012–1054 (ANLP…QALP), and 1076–1301 (QRDV…GQKP). Residues 842–857 (HDDDDEEEDSDEDSMG) are compositionally biased toward acidic residues. Residues 865–887 (LLNSTQTPPCSPIKSLNNSSSPV) show a composition bias toward polar residues. Low complexity-rich tracts occupy residues 922–942 (NSQSSNTQSTSGSSSSVTTAA), 1034–1043 (SSSMSPKKSP), and 1085–1107 (APSQSSSPCSSCSDFSMSGSCSD). Residues 1108 to 1120 (FDSDEASEGDADG) are compositionally biased toward acidic residues. Positions 1121–1137 (DPDRDGGRSRSEERDST) are enriched in basic and acidic residues. Composition is skewed to polar residues over residues 1151–1165 (ASLNNVQGNNGNMAI) and 1265–1278 (NTTAAGSAPLTNNN). Positions 1281-1293 (KHSEDSASSERHN) are enriched in basic and acidic residues. In terms of domain architecture, PWWP spans 1305–1378 (PLQLVWAKCR…TWQWLPANKL (74 aa)).

In terms of assembly, component of the Enok complex composed of at least Br140, enok, Eaf6 and Ing5. As part of the Enok complex, interacts with elg1 and the Elg1 RFC-like complex.

The protein localises to the nucleus. Its function is as follows. Scaffold subunit of the histone acetyltransferase (HAT) Enok complex which has histone H3 acetyltransferase activity. As part of the Enok complex, associates with the Elg1 RFC-like complex and down-regulates its PCNA-unloading function to promote the G1/S transition. May also play a role in maintaining the protein levels and stability of enok. The sequence is that of Bromodomain-containing protein homolog from Drosophila melanogaster (Fruit fly).